The following is a 726-amino-acid chain: PTS system glucose-specific EIICBA component (726 aa).

A PTS EIIC type-1 domain is found at 1 to 453 (MMKDTFKNVL…FNYATPGRNG (453 aa)). Helical transmembrane passes span 18–38 (FGKALMVVIAVMPAAGLMISI), 62–82 (IGWGVIGNLHILFALAIGGSW), 90–110 (AFAAGLAFILINRITGTIFGV), 139–159 (VLEAPALNMGVFVGIISGFVG), 184–204 (FVPFVVILRSAIAAILLAAFW), 311–331 (FKVGQMIGSFGILMGVIVAIY), 344–364 (GMMIATALATFLTGVTEPIEY), 365–385 (MFMFIATPMYLVYSLVQGAAF), and 419–439 (IVNFVWVTVLFAVIMYFIANF). The 83-residue stretch at 473-555 (GSQAVNIINL…QDILDSGEII (83 aa)) folds into the PTS EIIB type-1 domain. C495 acts as the Phosphocysteine intermediate; for EIIB activity in catalysis. The PTS EIIA type-1 domain maps to 596-700 (DPVFAQKMMG…ETSTVVVFTN (105 aa)). H648 functions as the Tele-phosphohistidine intermediate; for EIIA activity in the catalytic mechanism.

It localises to the cell membrane. The catalysed reaction is N(pros)-phospho-L-histidyl-[protein] + D-glucose(out) = D-glucose 6-phosphate(in) + L-histidyl-[protein]. Its function is as follows. The phosphoenolpyruvate-dependent sugar phosphotransferase system (sugar PTS), a major carbohydrate active transport system, catalyzes the phosphorylation of incoming sugar substrates concomitantly with their translocation across the cell membrane. This system is involved in glucose transport. The protein is PTS system glucose-specific EIICBA component (exp5) of Streptococcus pneumoniae serotype 4 (strain ATCC BAA-334 / TIGR4).